The following is a 281-amino-acid chain: Proteasome subunit beta 2 (281 aa).

Residues 1–53 constitute a propeptide, removed in mature form; by autocatalysis; sequence MEANTRSTGRLPAAFLTPGSSSFMDFLSEHQPEILPGNRQLPPTQGVIEAPHG. T54 serves as the catalytic Nucleophile.

Belongs to the peptidase T1B family. The 20S proteasome core is composed of 14 alpha and 14 beta subunits that assemble into four stacked heptameric rings, resulting in a barrel-shaped structure. The two inner rings, each composed of seven catalytic beta subunits, are sandwiched by two outer rings, each composed of seven alpha subunits. The catalytic chamber with the active sites is on the inside of the barrel. Has a gated structure, the ends of the cylinder being occluded by the N-termini of the alpha-subunits. Is capped by the proteasome-associated ATPase, ARC.

The protein resides in the cytoplasm. The enzyme catalyses Cleavage of peptide bonds with very broad specificity.. Its pathway is protein degradation; proteasomal Pup-dependent pathway. Its activity is regulated as follows. The formation of the proteasomal ATPase ARC-20S proteasome complex, likely via the docking of the C-termini of ARC into the intersubunit pockets in the alpha-rings, may trigger opening of the gate for substrate entry. Interconversion between the open-gate and close-gate conformations leads to a dynamic regulation of the 20S proteasome proteolysis activity. Its function is as follows. Component of the proteasome core, a large protease complex with broad specificity involved in protein degradation. This is Proteasome subunit beta 2 from Streptomyces avermitilis (strain ATCC 31267 / DSM 46492 / JCM 5070 / NBRC 14893 / NCIMB 12804 / NRRL 8165 / MA-4680).